The primary structure comprises 689 residues: Zinc finger protein 185 (689 aa).

2 disordered regions span residues 1–253 (MSIS…GRTK) and 298–534 (APDV…SCTS). The span at 35-52 (LKGDKSWITKQDESEGRT) shows a compositional bias: basic and acidic residues. S66 bears the Phosphoserine mark. A compositionally biased stretch (polar residues) spans 95 to 114 (IDSSSQPQQQFPKANGTPKS). S153 bears the Phosphoserine mark. A compositionally biased stretch (acidic residues) spans 157–166 (DTEEEEEEEV). P206 carries the post-translational modification Phosphoserine. 2 stretches are compositionally biased toward basic and acidic residues: residues 217 to 232 (KRVEVVEEDGPSEKSQ) and 310 to 331 (NKDKEAPCSRELQRDLAGEEAF). Residues 338-349 (AARSSAQLSDGN) show a composition bias toward polar residues. Low complexity-rich tracts occupy residues 373-382 (SSSATSVSAV) and 434-444 (DPAVPAQQPAD). At T447 the chain carries Phosphothreonine. Polar residues predominate over residues 448–458 (PERQSSPSGSE). S453 and S465 each carry phosphoserine. A compositionally biased stretch (polar residues) spans 504–524 (PTQQPADPSTPEQQNSPSGSE). The LIM zinc-binding domain maps to 627-689 (GICTYCNREI…HCGKCYEKLF (63 aa)).

In terms of tissue distribution, expressed in placenta, pancreas and kidney. Also expressed in prostate, testis, ovary and blood.

It localises to the cytoplasm. Its subcellular location is the cytoskeleton. The protein resides in the cell junction. It is found in the focal adhesion. In terms of biological role, may be involved in the regulation of cellular proliferation and/or differentiation. The sequence is that of Zinc finger protein 185 (ZNF185) from Homo sapiens (Human).